We begin with the raw amino-acid sequence, 376 residues long: Beta-centractin (376 aa).

Residue M1 is modified to N-acetylmethionine. Position 4 is a 3'-nitrotyrosine (Y4).

The protein belongs to the actin family. ARP1 subfamily.

It localises to the cytoplasm. The protein localises to the cytoskeleton. Its subcellular location is the microtubule organizing center. It is found in the centrosome. In terms of biological role, component of a multi-subunit complex involved in microtubule based vesicle motility. It is associated with the centrosome. In Homo sapiens (Human), this protein is Beta-centractin (ACTR1B).